The primary structure comprises 181 residues: Photosystem I assembly protein Ycf4 (181 aa).

Transmembrane regions (helical) follow at residues 19–41 and 61–83; these read YFWA…SSYF and LVMS…TLFW.

This sequence belongs to the Ycf4 family.

It is found in the plastid. Its subcellular location is the chloroplast thylakoid membrane. Functionally, seems to be required for the assembly of the photosystem I complex. This Trieres chinensis (Marine centric diatom) protein is Photosystem I assembly protein Ycf4.